Reading from the N-terminus, the 180-residue chain is MSRVGRLPIAVPAGITVTVTPDNVVTVKGPKGELVKTMHKDINIAVENNEVIVTRPSDQKAHRALHGLTRALINNMVIGVNEGYQKTLELVGVGYRAQLQGKKLVMNLGYSHPVEIEPIEGITFETPAATKVIVKGIDKEKVGAAAADIRKWRLPEPYKGKGIKFENEVIRRKEGKTGKK.

It belongs to the universal ribosomal protein uL6 family. Part of the 50S ribosomal subunit.

Functionally, this protein binds to the 23S rRNA, and is important in its secondary structure. It is located near the subunit interface in the base of the L7/L12 stalk, and near the tRNA binding site of the peptidyltransferase center. In Clostridium botulinum (strain Eklund 17B / Type B), this protein is Large ribosomal subunit protein uL6.